A 2374-amino-acid polypeptide reads, in one-letter code: Genome polyprotein (2374 aa).

G115 carries N-myristoyl glycine; by host lipidation. 2 disordered regions span residues 144 to 176 and 707 to 739; these read GDMP…GNVV and GADG…FDYP. Positions 157–174 are enriched in low complexity; that stretch reads GSNKGGSSTSPKSTSNGN. Polar residues predominate over residues 716 to 728; the sequence is APTSDLSDGNPTT. In terms of domain architecture, SF3 helicase spans 1361-1525; sequence YSTALSAISL…VAFSAAAALQ (165 aa). 1387 to 1394 provides a ligand contact to ATP; the sequence is GPPGTGKS. The N-myristoyl glycine; by host moiety is linked to residue G1600. The chain crosses the membrane as a helical span at residues 1649–1669; sequence IFAASSFLSLIAATLTIVRCL. Residues 1677–1699 are disordered; sequence GAYSGTPVPKPRKKDLPKQPVYS. Residue Y1679 is modified to O-(5'-phospho-RNA)-tyrosine. In terms of domain architecture, Peptidase C3 spans 1700 to 1889; sequence GPVRRQGFDP…FSARLTPERV (190 aa). Active-site for protease 3C activity residues include H1748, E1779, and C1852. In terms of domain architecture, RdRp catalytic spans 2126–2243; sequence SNVWSIDYSC…GSNQDFHPRE (118 aa). Catalysis depends on for RdRp activity residues D2132 and D2229.

As to quaternary structure, interacts with capsid protein VP1. Interacts with capsid protein VP3. In terms of assembly, interacts with capsid protein VP0. Interacts with capsid protein VP3. Interacts with capsid protein VP0. Interacts with capsid protein VP1. As to quaternary structure, homodimer. Interacts with protein 2B. Interacts with protein 2C. In terms of assembly, homodimer. Interacts with host ABCD3. Interacts with protein 2A. Interacts with host ACBD3. Homodimer. Interacts with host ABCD3. Interacts with protein 2A. Interacts with protein 3A. Interacts with protein 3C. Interacts with host ACBD3. As to quaternary structure, homodimer. Interacts with host ABCD3 (via GOLD domain) and PI4KB; these interactions allow the formation of a viral protein/ACBD3/PI4KB complex in order to synthesize PI4P at the viral RNA replication sites. Interacts with protein 2C. Interacts with protein 3C. Protein 3C: Interacts with protein 2A. Protein 3C: Interacts with protein 2C. Post-translationally, specific enzymatic cleavages by the viral protease in vivo yield a variety of precursors and mature proteins. The leader protein-VP0 junction is cleaved by 3C proteinase. The VP1/2A junction is cleaved by the protein 3CD in association with protein 2A. In terms of processing, uridylylated by the polymerase and is covalently linked to the 5'-end of genomic RNA. This uridylylated form acts as a nucleotide-peptide primer for the polymerase.

It is found in the virion. It localises to the host cytoplasm. The protein localises to the host cytoplasmic vesicle membrane. The protein resides in the host Golgi apparatus membrane. It catalyses the reaction Selective cleavage of Gln-|-Gly bond in the poliovirus polyprotein. In other picornavirus reactions Glu may be substituted for Gln, and Ser or Thr for Gly.. It carries out the reaction RNA(n) + a ribonucleoside 5'-triphosphate = RNA(n+1) + diphosphate. The catalysed reaction is ATP + H2O = ADP + phosphate + H(+). Functionally, required for viral RNA replication and viral RNA encapsidation. Does not have any proteolytic activity. In terms of biological role, forms an icosahedral capsid of pseudo T=3 symmetry with capsid proteins VP0 and VP3. Together they form an icosahedral capsid composed of 60 copies of each VP0, VP1, and VP3. All the three latter proteins contain a beta-sheet structure called beta-barrel jelly roll. Forms an icosahedral capsid of pseudo T=3 symmetry with capsid proteins VP1 and VP3. Together they form an icosahedral capsid composed of 60 copies of each VP0, VP1, and VP3. All the three latter proteins contain a beta-sheet structure called beta-barrel jelly roll. Its function is as follows. Forms an icosahedral capsid of pseudo T=3 symmetry with capsid proteins VP0 and VP1. Together they form an icosahedral capsid composed of 60 copies of each VP0, VP1, and VP3. All the three latter proteins contain a beta-sheet structure called beta-barrel jelly roll. Functionally, required for viral RNA replication. Does not have any proteolytic activity. In terms of biological role, affects membrane integrity and causes an increase in membrane permeability. Induces and associates with structural rearrangements of intracellular membranes. Displays RNA-binding, nucleotide binding and NTPase activities. May play a role in virion morphogenesis and viral RNA encapsidation by interacting with the capsid protein VP3. Its function is as follows. Serves as membrane anchor via its hydrophobic domain. Plays an essential role in viral RNA replication by recruiting PI4KB at the viral replication sites, thereby allowing the formation of rearranged membranous structures where viral replication takes place. Functionally, forms a primer, VPg-pU, which is utilized by the polymerase for the initiation of RNA chains. In terms of biological role, cysteine protease that generates mature viral proteins from the precursor polyprotein. In addition to its proteolytic activity, it binds to viral RNA, and thus influences viral genome replication. RNA and substrate cooperatively bind to the protease. Replicates the genomic and antigenomic RNAs by recognizing replications specific signals. Performs VPg uridylylation. The protein is Genome polyprotein of Salivirus A (isolate Human/Nigeria/NG-J1/2007) (SV-A).